We begin with the raw amino-acid sequence, 325 residues long: MLKAPRFWYQPRSLLGGILSPFSFLYQIIVRIRRGLYAVGLKKISKFPVPIVIVGNITVGGSGKTPFVIWLANELKNRGFRPGVVSRGYGGKANRFLQTVTENSDPLQVGDEAVLLMKKIDCPMVVCRDRGAAVKHLLRNFQCDVVIGDDGLQHYSLGRDLEIALLDDRHLGNGRCLPAGPLREPKSRLNTVDFVVPKQLRPNEIYQLKNPAKKIDFNELKELTVHAVAGIGNPGYFFKQLETLGANVIAHPFRDHYFYRSEDFNFDDDHLIILTEKDAIKCKQFDDERLFCFSVDAVVPDQFQNDFFRLISNIILRKQAQREGI.

Position 58–65 (Thr-58–Thr-65) interacts with ATP.

Belongs to the LpxK family.

It catalyses the reaction a lipid A disaccharide + ATP = a lipid IVA + ADP + H(+). Its pathway is glycolipid biosynthesis; lipid IV(A) biosynthesis; lipid IV(A) from (3R)-3-hydroxytetradecanoyl-[acyl-carrier-protein] and UDP-N-acetyl-alpha-D-glucosamine: step 6/6. Transfers the gamma-phosphate of ATP to the 4'-position of a tetraacyldisaccharide 1-phosphate intermediate (termed DS-1-P) to form tetraacyldisaccharide 1,4'-bis-phosphate (lipid IVA). The sequence is that of Tetraacyldisaccharide 4'-kinase from Coxiella burnetii (strain CbuK_Q154) (Coxiella burnetii (strain Q154)).